Reading from the N-terminus, the 350-residue chain is Phosphotriesterase-related protein (350 aa).

The a divalent metal cation site is built by His22, His24, Glu169, His201, His230, and Asp298.

Belongs to the metallo-dependent hydrolases superfamily. Phosphotriesterase family. A divalent metal cation is required as a cofactor.

This chain is Phosphotriesterase-related protein, found in Drosophila melanogaster (Fruit fly).